Reading from the N-terminus, the 450-residue chain is Ceramide glucosyltransferase (450 aa).

Residues 1–8 (MSDSGTLS) are Lumenal-facing. The helical transmembrane segment at 9-29 (LIGGIVFLVLWVVVWSICLLG) threads the bilayer. At 30-337 (WRTARIRYAH…IRVRKKMTLA (308 aa)) the chain is on the cytoplasmic side. Asp-96 is a short sequence motif (D1). A short sequence motif (D2) is located at residue Asp-148. Residue Asp-286 is a short sequence motif, D3. Catalysis depends on Asp-286, which acts as the Proton acceptor. The (Q/R)XXRW signature appears at 323–327 (RRVRW). The chain crosses the membrane as a helical span at residues 338 to 358 (ATLLEPLTESIISGLYGAWAI). Topologically, residues 359–361 (SRL) are lumenal. A helical transmembrane segment spans residues 362 to 382 (LGGNILPLFLLHMAAWISVDI). Residues 383-401 (STKRALETNIKGIGPPESK) lie on the Cytoplasmic side of the membrane. Residues 402–422 (VTFLMAWAARECLALPIWMLA) traverse the membrane as a helical segment. Topologically, residues 423-450 (MTSSEVVWRGQKYKIIASGEAIRLGDRN) are lumenal.

Belongs to the glycosyltransferase 2 family.

Its subcellular location is the golgi apparatus membrane. It catalyses the reaction an N-acylsphing-4-enine + UDP-alpha-D-glucose = a beta-D-glucosyl-(1&lt;-&gt;1')-N-acylsphing-4-enine + UDP + H(+). It functions in the pathway lipid metabolism; sphingolipid metabolism. In terms of biological role, catalyzes the final step in the biosynthesis of the membrane lipid glucosylceramide (GluCer), the transfer of glucose to ceramide. Glucosylceramides play important roles in growth, differentiation and pathogenicity. Essential factor in determining the success of fungal infection by regulating survival of yeast cells during the initial colonization of the host lung. This chain is Ceramide glucosyltransferase, found in Cryptococcus neoformans var. grubii serotype A (strain H99 / ATCC 208821 / CBS 10515 / FGSC 9487) (Filobasidiella neoformans var. grubii).